The chain runs to 805 residues: Leucine--tRNA ligase (805 aa).

The 'HIGH' region motif lies at 40–51 (PYPSGSGLHVGH). Residues 576-580 (KMSKS) carry the 'KMSKS' region motif. Position 579 (Lys579) interacts with ATP.

The protein belongs to the class-I aminoacyl-tRNA synthetase family.

Its subcellular location is the cytoplasm. It catalyses the reaction tRNA(Leu) + L-leucine + ATP = L-leucyl-tRNA(Leu) + AMP + diphosphate. The polypeptide is Leucine--tRNA ligase (Chlorobium luteolum (strain DSM 273 / BCRC 81028 / 2530) (Pelodictyon luteolum)).